We begin with the raw amino-acid sequence, 146 residues long: UPF0310 protein YdcG (146 aa).

The protein belongs to the UPF0310 family.

In Bacillus subtilis (strain 168), this protein is UPF0310 protein YdcG (ydcG).